The following is a 393-amino-acid chain: ATP phosphoribosyltransferase regulatory subunit (393 aa).

This sequence belongs to the class-II aminoacyl-tRNA synthetase family. HisZ subfamily. Heteromultimer composed of HisG and HisZ subunits.

It is found in the cytoplasm. It participates in amino-acid biosynthesis; L-histidine biosynthesis; L-histidine from 5-phospho-alpha-D-ribose 1-diphosphate: step 1/9. Its function is as follows. Required for the first step of histidine biosynthesis. May allow the feedback regulation of ATP phosphoribosyltransferase activity by histidine. The sequence is that of ATP phosphoribosyltransferase regulatory subunit from Synechococcus sp. (strain RCC307).